Reading from the N-terminus, the 346-residue chain is Cell division protein ZipA (346 aa).

The Periplasmic portion of the chain corresponds to 1–6 (MEDLQL). Residues 7 to 27 (VLFVLGAIAIVAVLVHGFWSI) form a helical membrane-spanning segment. Topologically, residues 28 to 346 (RRQQPKSLKD…DYLHRIRANA (319 aa)) are cytoplasmic. Disordered regions lie at residues 76 to 103 (ANEAHTPEAPAFNPYLKQEAKTQPQPVE) and 121 to 145 (QPDFSLQSPTAKEQHRGPKASRQEP).

It belongs to the ZipA family. As to quaternary structure, interacts with FtsZ via their C-terminal domains.

The protein resides in the cell inner membrane. Its function is as follows. Essential cell division protein that stabilizes the FtsZ protofilaments by cross-linking them and that serves as a cytoplasmic membrane anchor for the Z ring. Also required for the recruitment to the septal ring of downstream cell division proteins. The polypeptide is Cell division protein ZipA (Shewanella sp. (strain MR-7)).